The following is a 120-amino-acid chain: Large ribosomal subunit protein uL18 (120 aa).

This sequence belongs to the universal ribosomal protein uL18 family. In terms of assembly, part of the 50S ribosomal subunit; part of the 5S rRNA/L5/L18/L25 subcomplex. Contacts the 5S and 23S rRNAs.

Functionally, this is one of the proteins that bind and probably mediate the attachment of the 5S RNA into the large ribosomal subunit, where it forms part of the central protuberance. The chain is Large ribosomal subunit protein uL18 from Rhodospirillum rubrum (strain ATCC 11170 / ATH 1.1.1 / DSM 467 / LMG 4362 / NCIMB 8255 / S1).